Here is a 245-residue protein sequence, read N- to C-terminus: Biosynthetic peptidoglycan transglycosylase (245 aa).

The helical transmembrane segment at 29-49 (IVLAVLIVLILPYALIVFYLL) threads the bilayer.

The protein belongs to the glycosyltransferase 51 family.

The protein localises to the cell inner membrane. The catalysed reaction is [GlcNAc-(1-&gt;4)-Mur2Ac(oyl-L-Ala-gamma-D-Glu-L-Lys-D-Ala-D-Ala)](n)-di-trans,octa-cis-undecaprenyl diphosphate + beta-D-GlcNAc-(1-&gt;4)-Mur2Ac(oyl-L-Ala-gamma-D-Glu-L-Lys-D-Ala-D-Ala)-di-trans,octa-cis-undecaprenyl diphosphate = [GlcNAc-(1-&gt;4)-Mur2Ac(oyl-L-Ala-gamma-D-Glu-L-Lys-D-Ala-D-Ala)](n+1)-di-trans,octa-cis-undecaprenyl diphosphate + di-trans,octa-cis-undecaprenyl diphosphate + H(+). It participates in cell wall biogenesis; peptidoglycan biosynthesis. Functionally, peptidoglycan polymerase that catalyzes glycan chain elongation from lipid-linked precursors. The sequence is that of Biosynthetic peptidoglycan transglycosylase from Rhizobium johnstonii (strain DSM 114642 / LMG 32736 / 3841) (Rhizobium leguminosarum bv. viciae).